The primary structure comprises 203 residues: Cbp/p300-interacting transactivator 1 (203 aa).

Disordered stretches follow at residues 1 to 24 (MPTM…DANQ) and 51 to 86 (TANG…PSFN). Low complexity predominate over residues 61 to 84 (PTSSSGSTSPIGSPTATPSSKPPS). A Nuclear export signal motif is present at residues 168–177 (LMSLVVELGL).

Belongs to the CITED family. As to quaternary structure, homodimer. Binds to RBM14. Interacts (via N-terminus) with HSPA8; the interaction suppresses the association of CITED1 with p300/CBP and SMAD-mediated transcription transactivation. Interacts (via C-terminus) with TOX3 (via HGM box); the interaction increases estrogen-response element (ERE)-dependent transcription and protection against cell death. Interacts with ESR1; the interaction occurs in a estrogen-dependent manner. Interacts (unphosphorylated form preferentially and via C-terminus) with EP300. Interacts (via C-terminus) with CREBBP. Interacts with EGR2. Phosphorylated. Phosphorylation changes in a cell cycle-dependent manner and reduces its transcriptional cofactor activity. Expressed in calvarial osteoblasts. Expressed in nulliparous mammary epithelial cells; absent in pregnant mice and in lacting mammary glands. Also expressed in mammary tumors (at protein level). Expressed only in melanocytes and testis. Expressed at high levels in the strongly pigmented melanoma cells but at low levels in the weakly pigmented cells.

It is found in the nucleus. Its subcellular location is the cytoplasm. In terms of biological role, transcriptional coactivator of the p300/CBP-mediated transcription complex. Enhances SMAD-mediated transcription by strengthening the functional link between the DNA-binding SMAD transcription factors and the p300/CBP transcription coactivator complex. Stimulates estrogen-dependent transactivation activity mediated by estrogen receptors signaling; stabilizes the interaction of estrogen receptor ESR1 and histone acetyltransferase EP300. Positively regulates TGF-beta signaling through its association with the SMAD/p300/CBP-mediated transcriptional coactivator complex. Induces transcription from estrogen-responsive promoters and protection against cell death. Potentiates EGR2-mediated transcriptional activation activity from the ERBB2 promoter. Acts as an inhibitor of osteoblastic mineralization through a cAMP-dependent parathyroid hormone receptor signaling. May play a role in pigmentation of melanocytes. Associates with chromatin to the estrogen-responsive TGF-alpha promoter region in a estrogen-dependent manner. The polypeptide is Cbp/p300-interacting transactivator 1 (Cited1) (Mus musculus (Mouse)).